Reading from the N-terminus, the 231-residue chain is Protein RhiA (231 aa).

Its function is as follows. May be involved in plant-microbe interaction. This Rhizobium leguminosarum bv. viciae protein is Protein RhiA (rhiA).